Here is a 358-residue protein sequence, read N- to C-terminus: MEFRGDANKRIAMISAHLQPSFTPQMEAKNSVMGRENCRAKGGNPGFKVAILGAAGGIGQSLSLLMKMNPLVSLLHLYDVVNAPGVTADVSHMDTGAVVRGFLGAKQLEDALTGMDLVIIPAGVPRKPGMTRDDLFKINAGIVKTLCEGVAKCCPNAIVNLISNPVNSTVAIAAEVFKKAGTYDPKKLLGVTTLDVARANTFVAEVLGLDPREVDVPVVGGHAGVTILPLLSQVKPPSSFTPSEIEYLTNRIQNGGTEVVEAKAGAGSATLSMAYAAAKFADACLRGLRGDANVIECSFVASQVTELAFFATKVRLGRTGAEEVFQLGPLNEYERVGLEKAKEELAGSIQKGVDFIRK.

Residues 1 to 38 (MEFRGDANKRIAMISAHLQPSFTPQMEAKNSVMGRENC) constitute a glyoxysome transit peptide. NAD(+) contacts are provided by residues 53 to 59 (GAAGGIG) and Asp-79. Substrate-binding residues include Arg-126 and Arg-132. NAD(+) is bound by residues Asn-139 and 162-164 (ISN). Substrate-binding residues include Asn-164 and Arg-198. His-222 functions as the Proton acceptor in the catalytic mechanism. Met-273 contacts NAD(+).

Belongs to the LDH/MDH superfamily. MDH type 1 family. Homodimer.

The protein resides in the glyoxysome. The enzyme catalyses (S)-malate + NAD(+) = oxaloacetate + NADH + H(+). The protein is Malate dehydrogenase 2, glyoxysomal (MDH2) of Brassica napus (Rape).